The following is a 274-amino-acid chain: Pyrroline-5-carboxylate reductase 3 (274 aa).

Position 2 is an N-acetylalanine (Ala2).

Belongs to the pyrroline-5-carboxylate reductase family. As to quaternary structure, homodecamer; composed of 5 homodimers.

The protein resides in the cytoplasm. It catalyses the reaction L-proline + NADP(+) = (S)-1-pyrroline-5-carboxylate + NADPH + 2 H(+). The catalysed reaction is L-proline + NAD(+) = (S)-1-pyrroline-5-carboxylate + NADH + 2 H(+). The protein operates within amino-acid biosynthesis; L-proline biosynthesis; L-proline from L-glutamate 5-semialdehyde: step 1/1. Oxidoreductase that catalyzes the last step in proline biosynthesis, which corresponds to the reduction of pyrroline-5-carboxylate (P5C) to L-proline using NAD(P)H. Proline is synthesized from either glutamate or ornithine; both are converted to P5C, and then to proline via pyrroline-5-carboxylate reductases (PYCRs). PYCR3 is exclusively linked to the biosynthesis of proline from ornithine. The sequence is that of Pyrroline-5-carboxylate reductase 3 from Macaca fascicularis (Crab-eating macaque).